The chain runs to 72 residues: Crustacean hyperglycemic hormone A (72 aa).

Glutamine 1 bears the Pyrrolidone carboxylic acid mark. Phenylalanine 3 bears the D-phenylalanine; in form CHHA-II mark. 3 cysteine pairs are disulfide-bonded: cysteine 7-cysteine 43, cysteine 23-cysteine 39, and cysteine 26-cysteine 52. Valine 72 carries the post-translational modification Valine amide.

Post-translationally, stereoinversion of L-Phe (in CHHA-I) to D-Phe (in CHHA-II).

Its subcellular location is the secreted. In terms of biological role, hormone found in the sinus gland of isopods and decapods which controls the blood sugar level. Has a secretagogue action over the amylase released from the midgut gland. May act as a stress hormone and may be involved in the control of molting and reproduction. The chain is Crustacean hyperglycemic hormone A from Cherax destructor (Common yabby crayfish).